A 254-amino-acid chain; its full sequence is 3-deoxy-manno-octulosonate cytidylyltransferase (254 aa).

It belongs to the KdsB family.

The protein resides in the cytoplasm. It carries out the reaction 3-deoxy-alpha-D-manno-oct-2-ulosonate + CTP = CMP-3-deoxy-beta-D-manno-octulosonate + diphosphate. The protein operates within nucleotide-sugar biosynthesis; CMP-3-deoxy-D-manno-octulosonate biosynthesis; CMP-3-deoxy-D-manno-octulosonate from 3-deoxy-D-manno-octulosonate and CTP: step 1/1. Its pathway is bacterial outer membrane biogenesis; lipopolysaccharide biosynthesis. Its function is as follows. Activates KDO (a required 8-carbon sugar) for incorporation into bacterial lipopolysaccharide in Gram-negative bacteria. This chain is 3-deoxy-manno-octulosonate cytidylyltransferase, found in Ectopseudomonas mendocina (strain ymp) (Pseudomonas mendocina).